The chain runs to 177 residues: NADH-quinone oxidoreductase subunit B (177 aa).

4 residues coordinate [4Fe-4S] cluster: cysteine 56, cysteine 57, cysteine 121, and cysteine 151.

It belongs to the complex I 20 kDa subunit family. NDH-1 is composed of 14 different subunits. Subunits NuoB, C, D, E, F, and G constitute the peripheral sector of the complex. [4Fe-4S] cluster serves as cofactor.

It is found in the cell inner membrane. The enzyme catalyses a quinone + NADH + 5 H(+)(in) = a quinol + NAD(+) + 4 H(+)(out). Its function is as follows. NDH-1 shuttles electrons from NADH, via FMN and iron-sulfur (Fe-S) centers, to quinones in the respiratory chain. Couples the redox reaction to proton translocation (for every two electrons transferred, four hydrogen ions are translocated across the cytoplasmic membrane), and thus conserves the redox energy in a proton gradient. The sequence is that of NADH-quinone oxidoreductase subunit B from Roseobacter denitrificans (strain ATCC 33942 / OCh 114) (Erythrobacter sp. (strain OCh 114)).